We begin with the raw amino-acid sequence, 767 residues long: MTISPPESGEKDKKILESPVKADPRPIDFAKLDKPGFWSSKLSKGPKTTTWIWNLHADAHDFDIHTGDAEEATRKIFSAHFGHLAVIFIWMSAAFFHGARFSNYSGWLADPTHVKPGAQQVWAIVGQEMLNGDLGANYNGIQISSGVFHMWRAWGITNESELMALAIGAVVMAALMLHAGIFHYHKAAPKMEWFQNIESMLNHHIAGLVGLGSLAWAGHCIHIGAPTAALLDAIDAGTPLVINGKEIATIADMPMPHQLCDPQIIAQIFPGLASGTGNFFSLNWLAFSDFLTFKGGLNPVTGSLWMTDVSHHHLAFGVIAIIGGHMYRTNYGIGHSMKEILDSQQGDPILFPAPKGHQGLFEFMAESRHAQLSVNLAMLGSLSILISHHMYAMPPYPYIATDYMTVLGLFTHHMWIGGLFIVGAGAHAGIAMVRDYDPAKHIDNVLDRILKARDALISHLNWVCMWLGFHSFGLYIHNDTMRALGRPQDMFSDSAIQLQPIFAQWVQSIQASAVGTSILAGTAEALPHKAISEVFNGSLVEVGGKVAIAPIPLGTADLMIHHIHAFQIHVTVLILLKGVLYARSSRLIPDKASLGFRFPCDGPGRGGTCQVSSWDHVFLGLFWMYNCLSIVIFHFSWKMQSDVWGLTGGNFSQSAITINGWLRDFLWAQSSQVLTSYGSAISMYGLMFLGAHFIWAFSLMFLFSGRGYWQELFESIVWAHNKLKVAPTIQPRALSITQGRAVGVTHFLVGGIATTWAFFHARLFGLG.

A disordered region spans residues 1 to 22 (MTISPPESGEKDKKILESPVKA). A compositionally biased stretch (basic and acidic residues) spans 8-22 (SGEKDKKILESPVKA). The next 8 helical transmembrane spans lie at 76-99 (IFSAHFGHLAVIFIWMSAAFFHGA), 162-185 (LMALAIGAVVMAALMLHAGIFHYH), 201-225 (LNHHIAGLVGLGSLAWAGHCIHIGA), 309-327 (VSHHHLAFGVIAIIGGHMY), 368-391 (RHAQLSVNLAMLGSLSILISHHMY), 407-433 (LGLFTHHMWIGGLFIVGAGAHAGIAMV), 455-477 (ALISHLNWVCMWLGFHSFGLYIH), and 558-576 (LMIHHIHAFQIHVTVLILL). The [4Fe-4S] cluster site is built by C600 and C609. Helical transmembrane passes span 616–637 (HVFLGLFWMYNCLSIVIFHFSW) and 681–703 (ISMYGLMFLGAHFIWAFSLMFLF). H692 contacts divinylchlorophyll a'. Divinyl chlorophyll a-binding residues include M700 and Y708. W709 is a phylloquinone binding site. The helical transmembrane segment at 741–761 (AVGVTHFLVGGIATTWAFFHA) threads the bilayer.

The protein belongs to the PsaA/PsaB family. As to quaternary structure, the PsaA/B heterodimer binds the P700 divinyl chlorophyll special pair and subsequent electron acceptors. PSI consists of a core antenna complex that captures photons, and an electron transfer chain that converts photonic excitation into a charge separation. The cyanobacterial PSI reaction center is composed of one copy each of PsaA,B,C,D,E,F,I,J,K,L,M and X, and forms trimeric complexes. Requires PSI electron transfer chain: 5 divinyl chlorophyll a, 1 divinyl chlorophyll a', 2 phylloquinones and 3 4Fe-4S clusters. PSI core antenna: 90 divinyl chlorophyll a, 22 carotenoids, 3 phospholipids and 1 galactolipid. P700 is a divinyl chlorophyll a/divinyl chlorophyll a' dimer, A0 is one or more divinyl chlorophyll a, A1 is one or both phylloquinones and FX is a shared 4Fe-4S iron-sulfur center. as cofactor.

The protein resides in the cellular thylakoid membrane. The enzyme catalyses reduced [plastocyanin] + hnu + oxidized [2Fe-2S]-[ferredoxin] = oxidized [plastocyanin] + reduced [2Fe-2S]-[ferredoxin]. Its function is as follows. PsaA and PsaB bind P700, the primary electron donor of photosystem I (PSI), as well as the electron acceptors A0, A1 and FX. PSI is a plastocyanin/cytochrome c6-ferredoxin oxidoreductase, converting photonic excitation into a charge separation, which transfers an electron from the donor P700 chlorophyll pair to the spectroscopically characterized acceptors A0, A1, FX, FA and FB in turn. Oxidized P700 is reduced on the lumenal side of the thylakoid membrane by plastocyanin or cytochrome c6. The protein is Photosystem I P700 chlorophyll a apoprotein A1 of Prochlorococcus marinus subsp. pastoris (strain CCMP1986 / NIES-2087 / MED4).